The chain runs to 144 residues: Putative lipoprotein MAH_0816 (144 aa).

The signal sequence occupies residues 1-24 (MRWPMQNRTTAVIAVALATTALVA). The N-palmitoyl cysteine moiety is linked to residue Cys25. Cys25 carries S-diacylglycerol cysteine lipidation.

This sequence belongs to the mycobacterial 19 kDa antigen family.

It localises to the cell membrane. This is Putative lipoprotein MAH_0816 from Mycobacterium avium subsp. hominissuis (strain TH135).